We begin with the raw amino-acid sequence, 679 residues long: Glycine--tRNA ligase beta subunit (679 aa).

The protein belongs to the class-II aminoacyl-tRNA synthetase family. Tetramer of two alpha and two beta subunits.

It is found in the cytoplasm. The catalysed reaction is tRNA(Gly) + glycine + ATP = glycyl-tRNA(Gly) + AMP + diphosphate. This is Glycine--tRNA ligase beta subunit from Streptococcus mutans serotype c (strain ATCC 700610 / UA159).